The sequence spans 76 residues: Toxin Acra III-2 (76 aa).

The 65-residue stretch at 3–67 folds into the LCN-type CS-alpha/beta domain; it reads VPGNYPLNTY…IWDAVKNHCT (65 aa). Intrachain disulfides connect Cys-18–Cys-41, Cys-27–Cys-46, and Cys-31–Cys-48.

Belongs to the long (3 C-C) scorpion toxin superfamily. Sodium channel inhibitor family. Beta subfamily. As to expression, expressed by the venom gland.

The protein resides in the secreted. In terms of biological role, binds to sodium channels (Nav) and affects the channel activation process. This chain is Toxin Acra III-2, found in Androctonus crassicauda (Arabian fat-tailed scorpion).